Reading from the N-terminus, the 292-residue chain is Glycine--tRNA ligase alpha subunit (292 aa).

This sequence belongs to the class-II aminoacyl-tRNA synthetase family. Tetramer of two alpha and two beta subunits.

It localises to the cytoplasm. The catalysed reaction is tRNA(Gly) + glycine + ATP = glycyl-tRNA(Gly) + AMP + diphosphate. In Syntrophus aciditrophicus (strain SB), this protein is Glycine--tRNA ligase alpha subunit.